We begin with the raw amino-acid sequence, 103 residues long: Large ribosomal subunit protein bL21 (103 aa).

This sequence belongs to the bacterial ribosomal protein bL21 family. Part of the 50S ribosomal subunit. Contacts protein L20.

Its function is as follows. This protein binds to 23S rRNA in the presence of protein L20. This chain is Large ribosomal subunit protein bL21, found in Wolinella succinogenes (strain ATCC 29543 / DSM 1740 / CCUG 13145 / JCM 31913 / LMG 7466 / NCTC 11488 / FDC 602W) (Vibrio succinogenes).